The chain runs to 35 residues: PTEN upstream open reading frame MP31 (35 aa).

Interacts with lactate dehydrogenases LDHA and LDHB; interaction with mitochondrial LDH leads to inhibition of lactate dehydrogenase activity, preventing conversion of lactate to pyruvate. As to expression, detected in brain, kidney and liver (at protein level).

It localises to the mitochondrion. Functionally, inhibits lactate dehydrogenase (LDH)-mediated conversion of lactate to pyruvate in mitochondria by competing with mitochondrial LDH for binding to NAD(+). Also inhibits cellular lactate utilization. This is PTEN upstream open reading frame MP31 from Mus musculus (Mouse).